Here is a 502-residue protein sequence, read N- to C-terminus: MNLRPEEISSIIKQQIERYDSAVEVVDVGTVIQVGDGIARVHGLEKAMSGELLEFPGGIYGMAMNLEEDNIGCIILGKFTEIREGDQVKRTGRIVEVPVGEAMIGRVVNALGQPIDGKGEIKTDKFRPIENTAPGVVYRKSVHEPLQTGLKSIDAIVPIGRGQRELIIGDRQTGKTAVAVDTIINQKGKDVICIYVAVGQKASTVAGVVKTLADHGAMDYSIVVSATASEPAPMLYIAPYSGCAMGEEFMYNGKHVLIIYDDLTKQAAAYRELSLLLKRPPGREAYPGDVFYLHSRLLERAAKLSPDLGSGSMTALPIIETQAGDVSAYIPTNVISITDGQIFLETDLFNAGFRPAINVGISVSRVGGSAQIKAMKQVAGQLRLDLAQYRELAAFAQFGSDLDKITQMRLTRGERMMEILKQKQYEPMVVEEQVVVLYAAVKGFLDDIPVDKIKSFEEDYLRTMRTTKADLLAKIRTEKALNDELNAEIEKAITEVKEGFLG.

Residue 169–176 (GDRQTGKT) participates in ATP binding.

Belongs to the ATPase alpha/beta chains family. As to quaternary structure, F-type ATPases have 2 components, CF(1) - the catalytic core - and CF(0) - the membrane proton channel. CF(1) has five subunits: alpha(3), beta(3), gamma(1), delta(1), epsilon(1). CF(0) has three main subunits: a(1), b(2) and c(9-12). The alpha and beta chains form an alternating ring which encloses part of the gamma chain. CF(1) is attached to CF(0) by a central stalk formed by the gamma and epsilon chains, while a peripheral stalk is formed by the delta and b chains.

The protein localises to the cell membrane. It carries out the reaction ATP + H2O + 4 H(+)(in) = ADP + phosphate + 5 H(+)(out). Its function is as follows. Produces ATP from ADP in the presence of a proton gradient across the membrane. The alpha chain is a regulatory subunit. The chain is ATP synthase subunit alpha from Desulfitobacterium hafniense (strain Y51).